Consider the following 313-residue polypeptide: Aspartate carbamoyltransferase catalytic subunit (313 aa).

Positions 59 and 60 each coordinate carbamoyl phosphate. Lys87 contributes to the L-aspartate binding site. Carbamoyl phosphate contacts are provided by Arg109, His137, and Gln140. Residues Arg170 and Arg224 each contribute to the L-aspartate site. 2 residues coordinate carbamoyl phosphate: Gly265 and Pro266.

This sequence belongs to the aspartate/ornithine carbamoyltransferase superfamily. ATCase family. Heterododecamer (2C3:3R2) of six catalytic PyrB chains organized as two trimers (C3), and six regulatory PyrI chains organized as three dimers (R2).

The catalysed reaction is carbamoyl phosphate + L-aspartate = N-carbamoyl-L-aspartate + phosphate + H(+). Its pathway is pyrimidine metabolism; UMP biosynthesis via de novo pathway; (S)-dihydroorotate from bicarbonate: step 2/3. Its function is as follows. Catalyzes the condensation of carbamoyl phosphate and aspartate to form carbamoyl aspartate and inorganic phosphate, the committed step in the de novo pyrimidine nucleotide biosynthesis pathway. In Agrobacterium fabrum (strain C58 / ATCC 33970) (Agrobacterium tumefaciens (strain C58)), this protein is Aspartate carbamoyltransferase catalytic subunit.